A 355-amino-acid chain; its full sequence is Peptide chain release factor 1 (355 aa).

At Gln-233 the chain carries N5-methylglutamine.

The protein belongs to the prokaryotic/mitochondrial release factor family. Methylated by PrmC. Methylation increases the termination efficiency of RF1.

Its subcellular location is the cytoplasm. Functionally, peptide chain release factor 1 directs the termination of translation in response to the peptide chain termination codons UAG and UAA. This chain is Peptide chain release factor 1, found in Syntrophomonas wolfei subsp. wolfei (strain DSM 2245B / Goettingen).